The primary structure comprises 85 residues: Elicitor peptide 7 (85 aa).

The propeptide occupies 1–62 (MEGEGRREDG…TEVVNIPRSV (62 aa)). The tract at residues 66–85 (NVAARKGKQQTSSGKGGGTN) is disordered.

Belongs to the brassicaceae elicitor peptide family.

Functionally, elicitor of plant defense. The polypeptide is Elicitor peptide 7 (PEP7) (Arabidopsis thaliana (Mouse-ear cress)).